The following is a 318-amino-acid chain: Beta-sarcoglycan (318 aa).

The interval 1-32 (MAAAAAAAAEQQSSNGPVKKSMREKAVERRNV) is disordered. Residues 1–65 (MAAAAAAAAE…GLRGRKGNLA (65 aa)) lie on the Cytoplasmic side of the membrane. The span at 21-32 (SMREKAVERRNV) shows a compositional bias: basic and acidic residues. The chain crosses the membrane as a helical; Signal-anchor for type II membrane protein span at residues 66 to 86 (ICVIVLLFLLAVINLIITLVI). Residues 87-318 (WAVIRIGPNG…VSDNPCGNTH (232 aa)) are Extracellular-facing. 3 N-linked (GlcNAc...) asparagine glycosylation sites follow: N158, N211, and N258. Disulfide bonds link C288/C314 and C290/C307.

This sequence belongs to the sarcoglycan beta/delta/gamma/zeta family. Cross-link to form 2 major subcomplexes: one consisting of SGCB, SGCD and SGCG and the other consisting of SGCB and SGCD. The association between SGCB and SGCG is particularly strong while SGCA is loosely associated with the other sarcoglycans. Post-translationally, disulfide bonds are present.

It is found in the cell membrane. Its subcellular location is the sarcolemma. The protein resides in the cytoplasm. The protein localises to the cytoskeleton. Component of the sarcoglycan complex, a subcomplex of the dystrophin-glycoprotein complex which forms a link between the F-actin cytoskeleton and the extracellular matrix. This Oryctolagus cuniculus (Rabbit) protein is Beta-sarcoglycan (SGCB).